The chain runs to 116 residues: Large ribosomal subunit protein uL22 (116 aa).

Belongs to the universal ribosomal protein uL22 family. As to quaternary structure, part of the 50S ribosomal subunit.

Functionally, this protein binds specifically to 23S rRNA; its binding is stimulated by other ribosomal proteins, e.g. L4, L17, and L20. It is important during the early stages of 50S assembly. It makes multiple contacts with different domains of the 23S rRNA in the assembled 50S subunit and ribosome. The globular domain of the protein is located near the polypeptide exit tunnel on the outside of the subunit, while an extended beta-hairpin is found that lines the wall of the exit tunnel in the center of the 70S ribosome. This chain is Large ribosomal subunit protein uL22, found in Leptospira biflexa serovar Patoc (strain Patoc 1 / Ames).